A 475-amino-acid chain; its full sequence is Tryptophan--tRNA ligase, cytoplasmic (475 aa).

One can recognise a WHEP-TRS domain in the interval 12–68; it reads SPQELFSSIAAQGELVKSLKARKAPKEEIDSAVKMLLSLKTSYKEAMGEDYKADCPP. The interval 61-87 is disordered; it reads DYKADCPPGNSTPDSHGDPEAVDDKED. Lysine 158 carries the post-translational modification N6-succinyllysine. The short motif at 168–177 is the 'HIGH' region element; the sequence is PSSEAMHVGH. The 'KMSKS' region signature appears at 353 to 357; it reads KMSAS. Serine 355 is subject to Phosphoserine.

The protein belongs to the class-I aminoacyl-tRNA synthetase family. Homodimer. Interacts with oxidized form of GAPDH. In terms of processing, proteolytic cleavage generates 2 forms; T1-TrpRS and T2-TrpRS.

The protein resides in the cytoplasm. It carries out the reaction tRNA(Trp) + L-tryptophan + ATP = L-tryptophyl-tRNA(Trp) + AMP + diphosphate + H(+). Its function is as follows. Catalyzes the attachment of tryptophan to tRNA(Trp) in a two-step reaction: tryptophan is first activated by ATP to form Trp-AMP and then transferred to the acceptor end of the tRNA(Trp). Could also possess an angiostatic activity. This is Tryptophan--tRNA ligase, cytoplasmic (WARS1) from Oryctolagus cuniculus (Rabbit).